The chain runs to 173 residues: RNA pyrophosphohydrolase (173 aa).

The Nudix hydrolase domain maps to 11–164; that stretch reads PYRKCVGIVV…KKHVYMKVVS (154 aa). The Nudix box motif lies at 52–73; it reads GGIDEDEKPLDAAYRELYEETG.

It belongs to the Nudix hydrolase family. RppH subfamily. A divalent metal cation is required as a cofactor.

Accelerates the degradation of transcripts by removing pyrophosphate from the 5'-end of triphosphorylated RNA, leading to a more labile monophosphorylated state that can stimulate subsequent ribonuclease cleavage. The polypeptide is RNA pyrophosphohydrolase (Bartonella tribocorum (strain CIP 105476 / IBS 506)).